The primary structure comprises 244 residues: Protein crossbronx (244 aa).

One can recognise a UBC core domain in the interval 20–176 (QQEYKILAEY…VQKNIKESKE (157 aa)). Residues 209-244 (AGRSKQTEPSAQQANGGHATGLSWVKEGEFKPLSIE) form a disordered region.

It belongs to the ubiquitin-conjugating enzyme family. FTS subfamily.

In Drosophila erecta (Fruit fly), this protein is Protein crossbronx (cbx).